Here is a 134-residue protein sequence, read N- to C-terminus: uncharacterized protein (134 aa).

The segment at 59 to 92 (VSKPKRRSPHPHGNKAADKRKTTEKEPERKKRVG) is disordered. Residues 61–71 (KPKRRSPHPHG) are compositionally biased toward basic residues. Positions 73–87 (KAADKRKTTEKEPER) are enriched in basic and acidic residues.

This is an uncharacterized protein from Saccharomyces cerevisiae (strain ATCC 204508 / S288c) (Baker's yeast).